A 148-amino-acid chain; its full sequence is uncharacterized protein (148 aa).

The helical transmembrane segment at 22 to 40 (YFLSLTVVISIIHLFTTCV) threads the bilayer. The histidine-rich stretch occupies residues 43–141 (HNHSTHFPYL…YYPISRHYLH (99 aa)).

It localises to the host membrane. This is an uncharacterized protein from African swine fever virus (strain Badajoz 1971 Vero-adapted) (Ba71V).